Reading from the N-terminus, the 344-residue chain is Plastoglobule-localized metallopeptidase 48, chloroplastic (344 aa).

The N-terminal 47 residues, 1 to 47 (MAVSVSAPVLSLCYNQSGELSRSLGYRLPKKVGFSSGRRSVSYIGFG), are a transit peptide targeting the chloroplast. 2 helical membrane-spanning segments follow: residues 102 to 122 (LLGS…SVLV) and 169 to 189 (FIVV…QAVL). Histidine 191 serves as a coordination point for Zn(2+). Glutamate 192 is a catalytic residue. Zn(2+) is bound at residue histidine 195. The chain crosses the membrane as a helical span at residues 201-221 (GVWLTFANILTLGAYTVPAFG). Glutamate 240 serves as a coordination point for Zn(2+). A helical membrane pass occupies residues 256–272 (VVVSVLMKLAGGCPSIA).

Belongs to the peptidase M48 family. M48D subfamily. As to quaternary structure, interacts with plastoglobule (PG) core proteins ABC1K3, PES1 and CCD4. Requires Zn(2+) as cofactor. Mostly expressed in flowers (e.g. sepals, petals and stamen), seeds, leaves and cotyledons.

The protein resides in the plastid. Its subcellular location is the chloroplast. It localises to the plastoglobule. The protein localises to the chloroplast membrane. Metalloendopeptidase with a Zn-dependent proteolytic activity and substrate cleavage upstream of hydrophobic residues. Positive regulator of senescence, probably by degrading CCD4, thus participating in the controlled removal of carotenoids from the thylakoid membrane during the senescence process. The protein is Plastoglobule-localized metallopeptidase 48, chloroplastic of Arabidopsis thaliana (Mouse-ear cress).